Here is a 154-residue protein sequence, read N- to C-terminus: Catabolic 3-dehydroquinase (154 aa).

The Proton acceptor role is filled by tyrosine 25. Residues asparagine 79, histidine 85, and aspartate 92 each contribute to the substrate site. Histidine 105 serves as the catalytic Proton donor. Residues 106-107 (IS) and arginine 116 contribute to the substrate site.

Belongs to the type-II 3-dehydroquinase family. As to quaternary structure, homododecamer. Adopts a ring-like structure, composed of an arrangement of two hexameric rings stacked on top of one another.

The catalysed reaction is 3-dehydroquinate = 3-dehydroshikimate + H2O. Its pathway is aromatic compound metabolism; 3,4-dihydroxybenzoate biosynthesis; 3,4-dihydroxybenzoate from 3-dehydroquinate: step 1/2. Functionally, is involved in the catabolism of quinate. Allows the utilization of quinate as carbon source via the beta-ketoadipate pathway. The sequence is that of Catabolic 3-dehydroquinase from Botryotinia fuckeliana (strain B05.10) (Noble rot fungus).